Consider the following 205-residue polypeptide: HTH-type transcriptional regulator LuxR (205 aa).

Positions 15 to 75 (LKRKQQLMEI…EVLNHVVRQF (61 aa)) constitute an HTH tetR-type domain. A DNA-binding region (H-T-H motif) is located at residues 39–58 (HADIAEIAQVSVATVFNYFP).

In terms of biological role, regulatory protein of bacterial bioluminescence. It probably binds the autoinducer molecule and potentiates the transcription of the bioluminescence operon. In Vibrio harveyi (Beneckea harveyi), this protein is HTH-type transcriptional regulator LuxR (luxR).